The following is a 386-amino-acid chain: NADPH-dependent alkenal/one oxidoreductase, chloroplastic (386 aa).

It belongs to the zinc-containing alcohol dehydrogenase family. Quinone oxidoreductase subfamily.

Its subcellular location is the plastid. It localises to the chloroplast. Reduces the double bond in short-chain unsaturated carbonyls. Acts preferentially on alpha,beta-unsaturated ketones rather on alpha,beta-unsaturated aldehydes. Has no activity with (E)-2-hexenal and (E)-2-pentenal. Contributes to detoxify stromal reactive carbonyls produced under oxidative stress. The polypeptide is NADPH-dependent alkenal/one oxidoreductase, chloroplastic (Arabidopsis thaliana (Mouse-ear cress)).